A 315-amino-acid polypeptide reads, in one-letter code: Olfactory receptor 8J2 (315 aa).

Residues 1 to 24 (MASGNLTWVTEFILVGVSDDPELQ) lie on the Extracellular side of the membrane. The N-linked (GlcNAc...) asparagine glycan is linked to N5. The chain crosses the membrane as a helical span at residues 25-45 (IPLFLVFLVLYLLTVAGNLGI). The Cytoplasmic portion of the chain corresponds to 46-57 (ITLTSVDPQLQT). Residues 58–78 (PMYFFLRHLAIINLCNSTVVA) traverse the membrane as a helical segment. Residues 79-97 (PKMLVNFLVTKKTISYYGC) are Extracellular-facing. The cysteines at positions 97 and 179 are disulfide-linked. The chain crosses the membrane as a helical span at residues 98-118 (AAQLGGFLVFIVAEIFTLAAM). At 119 to 143 (AYDRYVAIWSPLLYAVVVSPKVCRL) the chain is on the cytoplasmic side. A helical membrane pass occupies residues 144-164 (LVSLTYLQSLITALTVSSCVF). The Extracellular portion of the chain corresponds to 165–205 (SVSYCSSNIINHFYCDDVPLLALSCSDTYIPETAVFIFSGT). Residues 206–226 (NLLFSMIVVLISYFNIVITIL) traverse the membrane as a helical segment. At 227–239 (RIRSSEGRQKAFS) the chain is on the cytoplasmic side. A helical transmembrane segment spans residues 240–260 (TCASHMIAVVVFYGTLLFMYL). Residues 261–271 (QPRSNHSLDTD) lie on the Extracellular side of the membrane. The N-linked (GlcNAc...) asparagine glycan is linked to N265. Residues 272-292 (KMASVFYTLVIPVLNPLIYSL) form a helical membrane-spanning segment. Residues 293–315 (RNKNVKDALKRFLDNPCRSLKLM) lie on the Cytoplasmic side of the membrane.

Belongs to the G-protein coupled receptor 1 family.

The protein localises to the membrane. Its function is as follows. Odorant receptor. This Homo sapiens (Human) protein is Olfactory receptor 8J2 (OR8J2).